The primary structure comprises 179 residues: O-acetyl-ADP-ribose deacetylase (179 aa).

The Macro domain maps to 1–175 (MTSRLQVIQG…LYARLLTQQG (175 aa)). Residues 11–12 (DI), Asn-25, 33–35 (GVD), and 122–126 (STGVY) each bind substrate. Residue Asp-35 is the Proton acceptor of the active site.

This sequence belongs to the MacroD-type family. YmdB subfamily. In terms of assembly, homodimer. Interacts with RNase III.

It carries out the reaction 3''-O-acetyl-ADP-D-ribose + H2O = ADP-D-ribose + acetate + H(+). It catalyses the reaction 2''-O-acetyl-ADP-D-ribose + H2O = ADP-D-ribose + acetate + H(+). In terms of biological role, deacetylates O-acetyl-ADP ribose to yield ADP-ribose and free acetate. Down-regulates ribonuclease 3 (RNase III) activity. Acts by interacting directly with the region of the ribonuclease that is required for dimerization/activation. This chain is O-acetyl-ADP-ribose deacetylase, found in Salmonella typhi.